Consider the following 141-residue polypeptide: Ubiquitin-like protein ATG12 (141 aa).

The segment at 24–54 (LELSPETAIPEPPSSVAVSPGTEEPPGDTKK) is disordered. Residue Gly-141 forms a Glycyl lysine isopeptide (Gly-Lys) (interchain with K-? in acceptor protein) linkage.

It belongs to the ATG12 family. In terms of assembly, forms a conjugate with ATG5. Part of the minor complex composed of 4 sets of ATG12-ATG5 and ATG16L1 (400 kDa); this complex interacts with ATG3 leading to disruption of ATG7 interaction and promotion of ATG8-like proteins lipidation. Forms an 800-kDa complex composed of ATG12-ATG5 and ATG16L2. Interacts with DHX58/RIG-1, IFIH1/MDA5 and MAVS/IPS-1 in monomeric form as well as in ATG12-ATG5 conjugate. The interaction with MAVS is further enhanced upon vesicular stomatitis virus (VSV) infection. Interacts with ATG3; this interaction is essential for phosphatidylethanolamine (PE)-conjugated ATG8-like proteins formation. Interacts with ATG7. Interacts with ATG10. The ATG12-ATG5 conjugate interacts with RAB33A; this interaction is bridged by ATG16L1 and promotes ATG12-ATG5-ATG16L1 complex recruitment to phagophores. Interacts with TECPR1. Interacts with SH3BGRL. The ATG12-ATG5 conjugate interacts with PDCD6IP (via the BRO1 domain); this interaction is bridged by ATG12 and promotes multiple PDCD6IP-mediated functions such as endolysosomal trafficking, macroautophagy and exosome biogenesis. Acetylated by EP300.

It is found in the cytoplasm. Its subcellular location is the preautophagosomal structure membrane. In terms of biological role, ubiquitin-like protein involved in autophagy vesicles formation. Conjugation with ATG5 through a ubiquitin-like conjugating system involving also ATG7 as an E1-like activating enzyme and ATG10 as an E2-like conjugating enzyme, is essential for its function. The ATG12-ATG5 conjugate acts as an E3-like enzyme which is required for lipidation of ATG8 family proteins and their association to the vesicle membranes. The ATG12-ATG5 conjugate also negatively regulates the innate antiviral immune response by blocking the type I IFN production pathway through direct association with RARRES3 and MAVS. Also plays a role in translation or delivery of incoming viral RNA to the translation apparatus. As part of the ATG8 conjugation system with ATG5 and ATG16L1, required for recruitment of LRRK2 to stressed lysosomes and induction of LRRK2 kinase activity in response to lysosomal stress. In Rattus norvegicus (Rat), this protein is Ubiquitin-like protein ATG12.